We begin with the raw amino-acid sequence, 184 residues long: Photosystem I assembly protein Ycf4 (184 aa).

The next 2 helical transmembrane spans lie at 22 to 42 (FCWA…GIPS) and 64 to 84 (IVMC…WCTI).

This sequence belongs to the Ycf4 family.

It localises to the plastid. Its subcellular location is the chloroplast thylakoid membrane. Functionally, seems to be required for the assembly of the photosystem I complex. This chain is Photosystem I assembly protein Ycf4, found in Huperzia lucidula (Shining clubmoss).